A 126-amino-acid chain; its full sequence is Aspartate 1-decarboxylase (126 aa).

The active-site Schiff-base intermediate with substrate; via pyruvic acid is serine 25. A Pyruvic acid (Ser) modification is found at serine 25. Threonine 57 contributes to the substrate binding site. Residue tyrosine 58 is the Proton donor of the active site. 73-75 (GAA) provides a ligand contact to substrate.

It belongs to the PanD family. Heterooctamer of four alpha and four beta subunits. Pyruvate serves as cofactor. Is synthesized initially as an inactive proenzyme, which is activated by self-cleavage at a specific serine bond to produce a beta-subunit with a hydroxyl group at its C-terminus and an alpha-subunit with a pyruvoyl group at its N-terminus.

It is found in the cytoplasm. The enzyme catalyses L-aspartate + H(+) = beta-alanine + CO2. It functions in the pathway cofactor biosynthesis; (R)-pantothenate biosynthesis; beta-alanine from L-aspartate: step 1/1. Its function is as follows. Catalyzes the pyruvoyl-dependent decarboxylation of aspartate to produce beta-alanine. The protein is Aspartate 1-decarboxylase of Cellvibrio japonicus (strain Ueda107) (Pseudomonas fluorescens subsp. cellulosa).